We begin with the raw amino-acid sequence, 121 residues long: Fluoride-specific ion channel FluC 1 (121 aa).

The next 4 membrane-spanning stretches (helical) occupy residues 3 to 23, 35 to 55, 64 to 84, and 92 to 112; these read YVYI…ISFL, VANL…IAFF, AITT…LELI, and FITL…LCYV. Positions 71 and 74 each coordinate Na(+).

It belongs to the fluoride channel Fluc/FEX (TC 1.A.43) family.

Its subcellular location is the cell membrane. The catalysed reaction is fluoride(in) = fluoride(out). With respect to regulation, na(+) is not transported, but it plays an essential structural role and its presence is essential for fluoride channel function. Functionally, fluoride-specific ion channel. Important for reducing fluoride concentration in the cell, thus reducing its toxicity. The polypeptide is Fluoride-specific ion channel FluC 1 (Staphylococcus aureus (strain bovine RF122 / ET3-1)).